The primary structure comprises 431 residues: TDP-daunosamine transferase DnrS (431 aa).

A signal peptide spans 1 to 23 (MKVLVTAFAMDAHFNGVVPLAWA).

This sequence belongs to the glycosyltransferase 28 family.

The enzyme catalyses dTDP-beta-L-daunosamine + epsilon-rhodomycinone = rhodomycin D + dTDP + H(+). Its pathway is antibiotic biosynthesis; daunorubicin biosynthesis. It participates in antibiotic biosynthesis; carminomycin biosynthesis. Its function is as follows. Involved in the biosynthesis of the anthracyclines carminomycin and daunorubicin (daunomycin) which are aromatic polyketide antibiotics that exhibit high cytotoxicity and are widely applied in the chemotherapy of a variety of cancers. Catalyzes the addition of the TDP activated glycoside, L-daunosamine-TDP (2,3,6-trideoxy-3-aminohexose-TDP) at position C-7 of epsilon-rhodomycinone to yield rhodomycin D. Glycosylation is a prerequisite for biological activity of anthracyclines and requires DnrQ which seems to act as an activator. The sequence is that of TDP-daunosamine transferase DnrS (dnrS) from Streptomyces peucetius.